The sequence spans 401 residues: L-rhamnonate dehydratase (401 aa).

Positions 29 and 55 each coordinate substrate. Mg(2+) contacts are provided by Asp222, Glu248, and Glu276. The active-site Proton acceptor is the His325. Substrate is bound at residue Glu345.

The protein belongs to the mandelate racemase/muconate lactonizing enzyme family. RhamD subfamily. Homooctamer; tetramer of dimers. It depends on Mg(2+) as a cofactor.

The enzyme catalyses L-rhamnonate = 2-dehydro-3-deoxy-L-rhamnonate + H2O. Functionally, catalyzes the dehydration of L-rhamnonate to 2-keto-3-deoxy-L-rhamnonate (KDR). Can also dehydrate L-lyxonate, L-mannonate and D-gulonate, although less efficiently, but not 2-keto-4-hydroxyheptane-1,7-dioate. The polypeptide is L-rhamnonate dehydratase (rhmD) (Escherichia coli (strain K12)).